The following is a 203-amino-acid chain: Protein-methionine-sulfoxide reductase heme-binding subunit MsrQ (203 aa).

Helical transmembrane passes span 10–30 (IFVLGCLFPLWWFYEAAMGLL), 37–57 (IMMDRLGLGALVFLLITLSMT), 75–95 (LGLWCFAYIVLHLVSYLVFIL), 110–130 (PYIIVGALGFLGLLALAVTSN), 147–167 (LVYVILGLGLLHFLWIVRSDL), and 169–189 (EWAIYAGIGGVLLVMRIPPVW).

Belongs to the MsrQ family. Heterodimer of a catalytic subunit (MsrP) and a heme-binding subunit (MsrQ). Requires FMN as cofactor. The cofactor is heme b.

The protein localises to the cell inner membrane. In terms of biological role, part of the MsrPQ system that repairs oxidized periplasmic proteins containing methionine sulfoxide residues (Met-O), using respiratory chain electrons. Thus protects these proteins from oxidative-stress damage caused by reactive species of oxygen and chlorine generated by the host defense mechanisms. MsrPQ is essential for the maintenance of envelope integrity under bleach stress, rescuing a wide series of structurally unrelated periplasmic proteins from methionine oxidation. MsrQ provides electrons for reduction to the reductase catalytic subunit MsrP, using the quinone pool of the respiratory chain. The protein is Protein-methionine-sulfoxide reductase heme-binding subunit MsrQ of Pseudomonas entomophila (strain L48).